The following is a 468-amino-acid chain: MPRLLTPQTPVHFIGVGGIGMSALAKILVDRGHPVSGSDPRDNPTVQHLESRGVTVFKEQTAECIQSVLATNQQPPVVVISTAIPDTNPELENARAHQLAIWHRSDLLAALIDQQASIAVAGSHGKTTTSTLITTLLIEAGEDPTAVIGGVVPCLGSNGHSGQGRLLVAEADESDGSLVKFRPSLGVITNLELDHTDHYDGLDDLISTLQRFGGGCERLIANYDDPILQEHFEPTAWWSNKQSENIAFAALPLQLDGDRCTARFYENGSAVGDFTLPMAGLHNLSNATAALAACRMEGIPFEALVEGLAQLQAPGRRFDLRGTWEGRHIVDDYAHHPSEVRATLTMAQLMVSSGRSPLPSPPQRLVAVFQPHRFSRTQQFFEAFAEALQNCDALLLAPVYAAGEQTIPGVCSNALAQRIRSLRPDLEIEVAENLNQLTDLVKQRSRPDDLVLAMGAGTVNSLWGRLTE.

Glycine 122–threonine 128 is an ATP binding site.

The protein belongs to the MurCDEF family.

It localises to the cytoplasm. It carries out the reaction UDP-N-acetyl-alpha-D-muramate + L-alanine + ATP = UDP-N-acetyl-alpha-D-muramoyl-L-alanine + ADP + phosphate + H(+). It participates in cell wall biogenesis; peptidoglycan biosynthesis. Cell wall formation. The chain is UDP-N-acetylmuramate--L-alanine ligase from Synechococcus sp. (strain CC9902).